The primary structure comprises 142 residues: Large ribosomal subunit protein uL22c (142 aa).

Belongs to the universal ribosomal protein uL22 family. In terms of assembly, part of the 50S ribosomal subunit.

The protein resides in the plastid. It localises to the chloroplast. In terms of biological role, this protein binds specifically to 23S rRNA. Its function is as follows. The globular domain of the protein is located near the polypeptide exit tunnel on the outside of the subunit, while an extended beta-hairpin is found that lines the wall of the exit tunnel in the center of the 70S ribosome. The chain is Large ribosomal subunit protein uL22c (rpl22) from Carica papaya (Papaya).